The following is a 389-amino-acid chain: Indole-3-acetate monooxygenase (389 aa).

It belongs to the HpaH/HsaA monooxygenase family.

It catalyses the reaction (indol-3-yl)acetate + NADH + O2 + H(+) = 2-hydroxy-(1H-indol-3-yl)acetate + NAD(+) + H2O. The enzyme catalyses indole + NADH + O2 + H(+) = indoxyl + NAD(+) + H2O. Involved in the degradation of the plant hormone indole-3-acetic acid (IAA). Catalyzes the first step of the pathway, the conversion of IAA to 2-hydroxy-IAA (2-OH-IAA). Can also convert indole to indoxyl, which spontaneously dimerizes in the presence of oxygen to form the blue pigment indigo. The protein is Indole-3-acetate monooxygenase of Pseudomonas putida (Arthrobacter siderocapsulatus).